Reading from the N-terminus, the 1077-residue chain is Disheveled-associated activator of morphogenesis 1 (1077 aa).

The residue at position 34 (S34) is a Phosphoserine. Residues 45–420 (LPMPPVEELD…QIVIQNDKGQ (376 aa)) form the GBD/FH3 domain. The stretch at 437–526 (RMLVNENEVK…ELNRRAVCAA (90 aa)) forms a coiled coil. Disordered regions lie at residues 457-478 (KEHNELQQKLEKKERECDAKTQ) and 526-596 (AVPG…PVSL). One can recognise an FH1 domain in the interval 528 to 599 (PGGPSPGAPG…PGAPVSLTLK (72 aa)). Composition is skewed to pro residues over residues 530-539 (GPSPGAPGGP) and 549-592 (LPPP…PPGA). In terms of domain architecture, FH2 spans 600–1008 (KKNIPQPTNA…EERRARLEAQ (409 aa)). Residues 693 to 702 (QNCNILLSRL) form an actin-binding region. The segment covering 1007–1026 (AQLKEQRERERKVRKAKESS) has biased composition (basic and acidic residues). Disordered regions lie at residues 1007 to 1033 (AQLKEQRERERKVRKAKESSEESGEFD) and 1056 to 1077 (RKRISNQVTDSSRERPITKLNF). Residues S1026 and S1029 each carry the phosphoserine modification. One can recognise a DAD domain in the interval 1026-1057 (SEESGEFDDLVSALRSGEVFDKDLSKLKRNRK). Over residues 1066 to 1077 (SSRERPITKLNF) the composition is skewed to basic and acidic residues.

The protein belongs to the formin homology family. As to quaternary structure, interacts with CIP4, FNBP1 and FNBP1L. Interacts with the SH3 domains of Abl, BTK, endophilin, spectrin and SRC. Binds specifically to GTP-bound CDC42 and RHOA. Interacts with INTU; INTU mediates the indirect interaction between DAAM1 and NPHP4. Interacts (via coiled coil domain) with KANK1 (via coiled coil domain). In terms of tissue distribution, in early embryogenesis, expressed in embryonic and extraembryonic ectoderm. In later stages of gastrulation, expressed also in somites and ribs and posterior vertebrae of developing skeletal system. During organogenesis, expressed in CNS, PNS, stomach, liver and limb bud.

It is found in the cytoplasm. It localises to the cytoskeleton. The protein localises to the cilium basal body. Its function is as follows. Binds to disheveled (Dvl) and Rho, and mediates Wnt-induced Dvl-Rho complex formation. May play a role as a scaffolding protein to recruit Rho-GDP and Rho-GEF, thereby enhancing Rho-GTP formation. Can direct nucleation and elongation of new actin filaments. Involved in building functional cilia. Involved in the organization of the subapical actin network in multiciliated epithelial cells. Together with DAAM2, required for myocardial maturation and sarcomere assembly. During cell division, may regulate RHOA activation that signals spindle orientation and chromosomal segregation. In Mus musculus (Mouse), this protein is Disheveled-associated activator of morphogenesis 1 (Daam1).